The following is a 542-amino-acid chain: Protein lin-9 homolog (542 aa).

Ala-2 is modified (N-acetylalanine). The tract at residues 2-296 (AELDQLPDES…QKQRPSRFFM (295 aa)) is sufficient for interaction with RB1. Lys-21 participates in a covalent cross-link: Glycyl lysine isopeptide (Lys-Gly) (interchain with G-Cter in SUMO2). Ser-65 and Ser-95 each carry phosphoserine. 2 positions are modified to phosphothreonine: Thr-96 and Thr-304. Phosphoserine occurs at positions 309 and 321. Residues 354–413 (MIKKEHIKKLREMNTEAEKLKSYSMPISIEFQRRYATIVLELEQLNKDLNKVLHKVQQYC) adopt a coiled-coil conformation.

Belongs to the lin-9 family. Component of the DREAM complex (also named LINC complex) at least composed of E2F4, E2F5, LIN9, LIN37, LIN52, LIN54, MYBL1, MYBL2, RBL1, RBL2, RBBP4, TFDP1 and TFDP2. The complex exists in quiescent cells where it represses cell cycle-dependent genes. It dissociates in S phase when LIN9, LIN37, LIN52 and LIN54 form a subcomplex that binds to MYBL2. Interacts with RB1. As to expression, expressed in thymus and testis.

Its subcellular location is the nucleus. The protein localises to the nucleoplasm. Functionally, acts as a tumor suppressor. Inhibits DNA synthesis. Its ability to inhibit oncogenic transformation is mediated through its association with RB1. Plays a role in the expression of genes required for the G1/S transition. The protein is Protein lin-9 homolog (LIN9) of Homo sapiens (Human).